The following is a 391-amino-acid chain: MAKAKFERTKPHVNIGTIGHVDHGKTTLTAAITKYFGEFKAYDQIDGAPEERARGITISTAHVEYESENRHYAHVDCPGHADYVKNMITGAAQMDGAILVVNAADGPMPQTREHILLGRQVGIPYMVVYLNKVDQVDDPELLELVEMEVRELLSSYDYPGDDIPIVKGSALAALEGRDAEIGENSIRELMKAVDDYIPTPERAVDLPFLMPIEDVFSISGRGTVVTGRVERGAVNVGDELEIVGIRPTKKTTCTGVEMFRKLLDRGEAGDNIGALLRGVERDGVERGQVLAKPGSVTPHTEFEAEAYILTKEEGGRHTPFFANYRPQFYFRTTDVTGTVKLPEGTEMVMPGDNLKFEVELIAPIAMEEKLRFAIREGGRTVGAGVVSKILK.

One can recognise a tr-type G domain in the interval 10–201 (KPHVNIGTIG…AVDDYIPTPE (192 aa)). The interval 19–26 (GHVDHGKT) is G1. A GTP-binding site is contributed by 19–26 (GHVDHGKT). T26 contributes to the Mg(2+) binding site. The G2 stretch occupies residues 55-59 (GITIS). Residues 76 to 79 (DCPG) form a G3 region. GTP is bound by residues 76 to 80 (DCPGH) and 131 to 134 (NKVD). A G4 region spans residues 131–134 (NKVD). The G5 stretch occupies residues 169–171 (SAL).

Belongs to the TRAFAC class translation factor GTPase superfamily. Classic translation factor GTPase family. EF-Tu/EF-1A subfamily. In terms of assembly, monomer.

Its subcellular location is the cytoplasm. It carries out the reaction GTP + H2O = GDP + phosphate + H(+). Functionally, GTP hydrolase that promotes the GTP-dependent binding of aminoacyl-tRNA to the A-site of ribosomes during protein biosynthesis. In Paracoccus denitrificans (strain Pd 1222), this protein is Elongation factor Tu.